Reading from the N-terminus, the 141-residue chain is Hemoglobin subunit alpha (141 aa).

The region spanning 1 to 141 (VLSSKDKANI…VSTVLTSKYR (141 aa)) is the Globin domain. Phosphoserine is present on S3. 2 positions are modified to N6-succinyllysine: K7 and K11. K16 is modified (N6-acetyllysine; alternate). K16 carries the post-translational modification N6-succinyllysine; alternate. Y24 carries the phosphotyrosine modification. Position 40 is an N6-succinyllysine (K40). S49 is modified (phosphoserine). An O2-binding site is contributed by H58. H87 is a binding site for heme b. S102 bears the Phosphoserine mark. At T108 the chain carries Phosphothreonine. S124 carries the phosphoserine modification. Phosphothreonine is present on residues T134 and T137. A Phosphoserine modification is found at S138.

The protein belongs to the globin family. As to quaternary structure, heterotetramer of two alpha chains and two beta chains. Red blood cells.

Involved in oxygen transport from the lung to the various peripheral tissues. In terms of biological role, hemopressin acts as an antagonist peptide of the cannabinoid receptor CNR1. Hemopressin-binding efficiently blocks cannabinoid receptor CNR1 and subsequent signaling. The sequence is that of Hemoglobin subunit alpha (HBA) from Vicugna pacos (Alpaca).